We begin with the raw amino-acid sequence, 65 residues long: Neurotoxin BmK-M3 (65 aa).

An LCN-type CS-alpha/beta domain is found at 2 to 64; the sequence is RDAYIAKPEN…VPIRVWGKCH (63 aa). 4 cysteine pairs are disulfide-bonded: C12–C63, C16–C36, C22–C46, and C26–C48.

This sequence belongs to the long (4 C-C) scorpion toxin superfamily. Sodium channel inhibitor family. Alpha subfamily. In terms of tissue distribution, expressed by the venom gland.

It is found in the secreted. Binds to sodium channels (Nav) and inhibits the inactivation of the activated channels, thereby blocking neuronal transmission. In Olivierus martensii (Manchurian scorpion), this protein is Neurotoxin BmK-M3.